The chain runs to 193 residues: Large ribosomal subunit protein uL18 (193 aa).

Belongs to the universal ribosomal protein uL18 family. In terms of assembly, part of the 50S ribosomal subunit. Contacts the 5S and 23S rRNAs.

This is one of the proteins that bind and probably mediate the attachment of the 5S RNA into the large ribosomal subunit, where it forms part of the central protuberance. This chain is Large ribosomal subunit protein uL18, found in Methanobrevibacter smithii (strain ATCC 35061 / DSM 861 / OCM 144 / PS).